Consider the following 108-residue polypeptide: Nucleoid-associated protein BARBAKC583_1239 (108 aa).

The protein belongs to the YbaB/EbfC family. As to quaternary structure, homodimer.

The protein localises to the cytoplasm. The protein resides in the nucleoid. Functionally, binds to DNA and alters its conformation. May be involved in regulation of gene expression, nucleoid organization and DNA protection. The sequence is that of Nucleoid-associated protein BARBAKC583_1239 from Bartonella bacilliformis (strain ATCC 35685 / KC583 / Herrer 020/F12,63).